The primary structure comprises 254 residues: Ribose-5-phosphate isomerase A (254 aa).

Residues 45–48, 105–108, and 118–121 each bind substrate; these read TGST, DGAD, and KGGG. Glu127 functions as the Proton acceptor in the catalytic mechanism. Position 145 (Lys145) interacts with substrate.

Belongs to the ribose 5-phosphate isomerase family. In terms of assembly, homodimer.

The catalysed reaction is aldehydo-D-ribose 5-phosphate = D-ribulose 5-phosphate. It functions in the pathway carbohydrate degradation; pentose phosphate pathway; D-ribose 5-phosphate from D-ribulose 5-phosphate (non-oxidative stage): step 1/1. In terms of biological role, catalyzes the reversible conversion of ribose-5-phosphate to ribulose 5-phosphate. This is Ribose-5-phosphate isomerase A from Treponema pallidum subsp. pallidum (strain SS14).